A 208-amino-acid chain; its full sequence is Small ribosomal subunit protein uS4 (208 aa).

The S4 RNA-binding domain maps to 98–159 (RRLDNVIYRL…KSRTVAVITN (62 aa)).

Belongs to the universal ribosomal protein uS4 family. As to quaternary structure, part of the 30S ribosomal subunit. Contacts protein S5. The interaction surface between S4 and S5 is involved in control of translational fidelity.

In terms of biological role, one of the primary rRNA binding proteins, it binds directly to 16S rRNA where it nucleates assembly of the body of the 30S subunit. Functionally, with S5 and S12 plays an important role in translational accuracy. The protein is Small ribosomal subunit protein uS4 of Desulfatibacillum aliphaticivorans.